Consider the following 111-residue polypeptide: uncharacterized protein (111 aa).

This is an uncharacterized protein from Microplitis demolitor bracovirus (isolate Webb) (MdBV).